Reading from the N-terminus, the 556-residue chain is Amidophosphoribosyltransferase (556 aa).

A propeptide spanning residues 1 to 57 (MCLAVGVGVRAPKHVPQIRRLGRAGRRLRCVTNCALGSCPIVTVQQPGRDFSSPREE) is cleaved from the precursor. Cys-58 functions as the Nucleophile in the catalytic mechanism. Residues 58-284 (CGVFGVWAPG…PGELLAIDAD (227 aa)) form the Glutamine amidotransferase type-2 domain. Cys-299 is a binding site for [4Fe-4S] cluster. Residues Ser-346, Asp-408, and Asp-409 each coordinate Mg(2+). Positions 445, 501, and 504 each coordinate [4Fe-4S] cluster.

The protein in the C-terminal section; belongs to the purine/pyrimidine phosphoribosyltransferase family. It depends on Mg(2+) as a cofactor. [4Fe-4S] cluster is required as a cofactor.

It catalyses the reaction 5-phospho-beta-D-ribosylamine + L-glutamate + diphosphate = 5-phospho-alpha-D-ribose 1-diphosphate + L-glutamine + H2O. It functions in the pathway purine metabolism; IMP biosynthesis via de novo pathway; N(1)-(5-phospho-D-ribosyl)glycinamide from 5-phospho-alpha-D-ribose 1-diphosphate: step 1/2. Catalyzes the formation of phosphoribosylamine from phosphoribosylpyrophosphate (PRPP) and glutamine. The protein is Amidophosphoribosyltransferase of Mycobacterium leprae (strain TN).